Reading from the N-terminus, the 481-residue chain is Glutamyl-tRNA(Gln) amidotransferase subunit A (481 aa).

Active-site charge relay system residues include lysine 76 and serine 151. Serine 175 functions as the Acyl-ester intermediate in the catalytic mechanism.

It belongs to the amidase family. GatA subfamily. Heterotrimer of A, B and C subunits.

It catalyses the reaction L-glutamyl-tRNA(Gln) + L-glutamine + ATP + H2O = L-glutaminyl-tRNA(Gln) + L-glutamate + ADP + phosphate + H(+). Its function is as follows. Allows the formation of correctly charged Gln-tRNA(Gln) through the transamidation of misacylated Glu-tRNA(Gln) in organisms which lack glutaminyl-tRNA synthetase. The reaction takes place in the presence of glutamine and ATP through an activated gamma-phospho-Glu-tRNA(Gln). This Neisseria meningitidis serogroup A / serotype 4A (strain DSM 15465 / Z2491) protein is Glutamyl-tRNA(Gln) amidotransferase subunit A.